Reading from the N-terminus, the 277-residue chain is Shikimate dehydrogenase (NADP(+)) (277 aa).

Shikimate is bound by residues 18–20 and Thr-65; that span reads SKS. Lys-69 (proton acceptor) is an active-site residue. Residue Glu-81 coordinates NADP(+). Shikimate contacts are provided by Asn-90 and Asp-106. NADP(+) is bound by residues 130-134, 154-159, and Met-217; these read GAGGA and NRTFSK. Residue Tyr-219 participates in shikimate binding. Residue Gly-241 coordinates NADP(+).

This sequence belongs to the shikimate dehydrogenase family. As to quaternary structure, homodimer.

It carries out the reaction shikimate + NADP(+) = 3-dehydroshikimate + NADPH + H(+). Its pathway is metabolic intermediate biosynthesis; chorismate biosynthesis; chorismate from D-erythrose 4-phosphate and phosphoenolpyruvate: step 4/7. In terms of biological role, involved in the biosynthesis of the chorismate, which leads to the biosynthesis of aromatic amino acids. Catalyzes the reversible NADPH linked reduction of 3-dehydroshikimate (DHSA) to yield shikimate (SA). The polypeptide is Shikimate dehydrogenase (NADP(+)) (Vibrio vulnificus (strain CMCP6)).